The sequence spans 160 residues: Fimbrial protein (160 aa).

A propeptide spans 1–7 (MKSLQKG) (leader sequence). N-methylphenylalanine is present on Phe-8. Residues 8 to 28 (FTLIELMIVVAIIGILAAFAI) traverse the membrane as a helical segment.

This sequence belongs to the N-Me-Phe pilin family. The pili are polar flexible filaments of about 5.4 nanometers diameter and 2.5 micrometers average length; they consist of only a single polypeptide chain arranged in a helical configuration of five subunits per turn in the assembled pilus.

The protein localises to the fimbrium. It localises to the membrane. This Dichelobacter nodosus (Bacteroides nodosus) protein is Fimbrial protein (fimA).